Reading from the N-terminus, the 208-residue chain is MKLTQDLTSDGPDPPVLGKPLTRAFFGRSVHDVAPDLIGATLLVDGVGGIIVEVEAYHHTEPAAHSHRGPTPRNMVMFGPPGFAYVYRSYGIHWCVNFVCEMDGSAAAVLIRALQPTHGIPAMRRRRGLHEERLLCSGPGRLCQALGISIAHNALPLDAPPIAVFRRTEKADVVAGVRIGITKAADLPWRYGLKGSKFLSKPFRSAGY.

Belongs to the DNA glycosylase MPG family.

This Nitrobacter winogradskyi (strain ATCC 25391 / DSM 10237 / CIP 104748 / NCIMB 11846 / Nb-255) protein is Putative 3-methyladenine DNA glycosylase.